We begin with the raw amino-acid sequence, 149 residues long: Large ribosomal subunit protein uL15 (149 aa).

Composition is skewed to basic residues over residues 1 to 14 and 21 to 30; these read MPTH…HRGH and RVGKHRKHPG. The segment at 1–42 is disordered; that stretch reads MPTHLSKTRKHRGHVSAGHGRVGKHRKHPGGRGLAGGQHHHR.

It belongs to the universal ribosomal protein uL15 family.

This Blumeria hordei (Barley powdery mildew) protein is Large ribosomal subunit protein uL15.